A 394-amino-acid chain; its full sequence is MSLQATPDDKFSFGLWTVGWQARDAFGDATRPVLDPIEAVHKLAEIGAYGVTFHDDDLVPFGADAATRDGIVAGFSKALDETGLIVPMVTTNLFTHPVFKDGGFTSNDRSVRRYAIRKVLRQMDLGAELGAKTLVLWGGREGAEYDSAKDVGAALDRYREALNLLAQYSEDQGYGLPFAIEPKPNEPRGDILLPTAGHAIAFVQELERPELFGINRETGHEQMSNLNFTQGIAQALWHKKLFHIDLNGQHGPKFDQDLVFGHGDLLNAFSLVDLLENGPDGGPAYDGPRHFDYKPSRTEDFDGVWESAKDNIRMYLLLKERAKAFRADPEVQAALAESKVDELRTPTLNPGETYADLLADRSAFEDYDADAVGAKGYGFVKLNQLAIDHLLGAR.

Active-site residues include H54 and D57. The Mg(2+) site is built by E181, E217, H220, D245, D255, D257, and D292.

The protein belongs to the xylose isomerase family. In terms of assembly, homotetramer. Requires Mg(2+) as cofactor.

The protein localises to the cytoplasm. The enzyme catalyses alpha-D-xylose = alpha-D-xylulofuranose. The sequence is that of Xylose isomerase (xylA) from Actinoplanes sp. (strain ATCC 31351 / 3876) (Ampullariella sp.).